An 813-amino-acid chain; its full sequence is Sorting nexin-29 (813 aa).

The RUN domain maps to 36-180; the sequence is SDSDSRVTCL…ILFAINIDNK (145 aa). Residues serine 268, serine 291, serine 292, serine 330, and serine 344 each carry the phosphoserine modification. Residues 269–299 are disordered; sequence FDDEEDEQNSGDVFKKTPGAGESSEDNSDRS. Positions 346 to 357 are enriched in acidic residues; that stretch reads DDEDVDENEDDV. The interval 346–378 is disordered; the sequence is DDEDVDENEDDVYGNSSGRKHRGHSESPEKPLE. Phosphoserine is present on residues serine 445 and serine 450. Positions 466 to 545 form a coiled coil; that stretch reads TISELRQATV…VLKVQLKKYV (80 aa). Serine 639 is subject to Phosphoserine. Residue threonine 641 is modified to Phosphothreonine. Serine 642 and serine 646 each carry phosphoserine. The region spanning 656 to 779 is the PX domain; it reads ALINVWIPSV…PFFVDITPPG (124 aa). The tract at residues 778–813 is disordered; that stretch reads PGEPVNSRPKAASRFPKLSRGQPRETRNVEPQSGDL.

Belongs to the sorting nexin family.

The protein is Sorting nexin-29 (SNX29) of Homo sapiens (Human).